Here is a 373-residue protein sequence, read N- to C-terminus: MTSTPIIPADLLPADGRFGCGPSKVRPEQLQSLVEVGSSVFGTSHRQKPVKDVVASVRSGLADLFSLPEGYEVVLGNGGTTAFWDAAAFGLIREKSLHLTNGEFSSKFASVAKNNPFIGDPIVVSADPGSAPEPVSDPSVDLIGWAHNETSTGVAIPVSRPAGSENALIAIDATSGAGGLPVNVADADVYYFAPQKCFAADGGLWIALMSPKALERVAEIKDSGRWTPDFLSLPIAVDNSSKDQTYNTPALATLLLLANQIDWLNGKGGLDWATSRTADSSSRLYQWAEASEYATPFVTDPAHRSQVVGTIDFDDKIDAAQVAKILRANGVVDTEPYRKLGRNQLRVGMFPAIDPEDVSQLTKSIDWVVSQLG.

Arg-46 is an L-glutamate binding site. Pyridoxal 5'-phosphate contacts are provided by Phe-104, Thr-150, Asp-172, and Gln-195. N6-(pyridoxal phosphate)lysine is present on Lys-196. 247–248 (NT) is a pyridoxal 5'-phosphate binding site.

Belongs to the class-V pyridoxal-phosphate-dependent aminotransferase family. SerC subfamily. Homodimer. Pyridoxal 5'-phosphate is required as a cofactor.

The protein localises to the cytoplasm. The catalysed reaction is O-phospho-L-serine + 2-oxoglutarate = 3-phosphooxypyruvate + L-glutamate. The enzyme catalyses 4-(phosphooxy)-L-threonine + 2-oxoglutarate = (R)-3-hydroxy-2-oxo-4-phosphooxybutanoate + L-glutamate. It functions in the pathway amino-acid biosynthesis; L-serine biosynthesis; L-serine from 3-phospho-D-glycerate: step 2/3. It participates in cofactor biosynthesis; pyridoxine 5'-phosphate biosynthesis; pyridoxine 5'-phosphate from D-erythrose 4-phosphate: step 3/5. In terms of biological role, catalyzes the reversible conversion of 3-phosphohydroxypyruvate to phosphoserine and of 3-hydroxy-2-oxo-4-phosphonooxybutanoate to phosphohydroxythreonine. The protein is Phosphoserine aminotransferase of Rhodococcus jostii (strain RHA1).